The primary structure comprises 297 residues: Protease HtpX homolog (297 aa).

Residues 16–36 (IFMAIGFLVGGMAGMILAFVV) traverse the membrane as a helical segment. Residue histidine 134 coordinates Zn(2+). Glutamate 135 is an active-site residue. Residue histidine 138 participates in Zn(2+) binding. 2 helical membrane-spanning segments follow: residues 147-167 (MTVTATLAGAIGMLANFALFF) and 175-195 (IGSIAIMIFAPMAAALVQMAI). Zn(2+) is bound at residue glutamate 200.

It belongs to the peptidase M48B family. Zn(2+) is required as a cofactor.

The protein localises to the cell inner membrane. This Hyphomonas neptunium (strain ATCC 15444) protein is Protease HtpX homolog.